Here is a 127-residue protein sequence, read N- to C-terminus: MORF4 family-associated protein 1-like 1 (127 aa).

Residues 87 to 118 (GEADERVSELCEKAEEKAKEIAKMAEMLVELV) adopt a coiled-coil conformation.

Belongs to the MORF4 family-associated protein family.

The chain is MORF4 family-associated protein 1-like 1 (MRFAP1L1) from Homo sapiens (Human).